The primary structure comprises 244 residues: Small ribosomal subunit protein eS4 (244 aa).

In terms of domain architecture, S4 RNA-binding spans 43-108 (LPLLLIVRDI…NYRVLFDRKG (66 aa)).

This sequence belongs to the eukaryotic ribosomal protein eS4 family.

The protein is Small ribosomal subunit protein eS4 (rps4e) of Methanocaldococcus jannaschii (strain ATCC 43067 / DSM 2661 / JAL-1 / JCM 10045 / NBRC 100440) (Methanococcus jannaschii).